The chain runs to 590 residues: Myo-inositol transporter 3A (590 aa).

At 1–57 the chain is on the cytoplasmic side; that stretch reads MSATHIENRDDSFLENKGIDHIGRPENNNGSQEPPSPSGFGGHLIDENLVRVEGEDK. A compositionally biased stretch (basic and acidic residues) spans 15–24; it reads ENKGIDHIGR. Residues 15–40 are disordered; sequence ENKGIDHIGRPENNNGSQEPPSPSGF. A helical membrane pass occupies residues 58–78; the sequence is VTWYLCFLISASAIAGFLFGY. Over 79-105 the chain is Extracellular; it reads DTGVVGVALPLVGTDLGGSALNSSQQE. A glycan (N-linked (GlcNAc...) asparagine) is linked at asparagine 100. Residues 106–126 traverse the membrane as a helical segment; sequence IITAGTTIGAIFGSAILGGWG. Residues 127 to 132 are Cytoplasmic-facing; sequence DRLGRK. Residues 133–153 form a helical membrane-spanning segment; it reads GAILVSDVFFTIGAVIIASSY. At 154-157 the chain is on the extracellular side; that stretch reads SVPQ. The chain crosses the membrane as a helical span at residues 158–178; the sequence is IIVGRIILGIGVGGAAVIAPL. Topologically, residues 179–192 are cytoplasmic; sequence FITETAPTAVRGRC. Residues 193 to 213 form a helical membrane-spanning segment; sequence IGVNAFFIPFGQVVSDAIGAG. The Extracellular segment spans residues 214–222; it reads VQNMHNGWR. A helical membrane pass occupies residues 223–243; that stretch reads LLFALGAVPSLLQLLLFHYLP. Residues 244–325 lie on the Cytoplasmic side of the membrane; sequence ESPRILILKG…AVSALQAAGQ (82 aa). A helical transmembrane segment spans residues 326–346; the sequence is LTGFNTLLYYAGTLFGLLGLS. Topologically, residues 347-349 are extracellular; the sequence is NPA. The helical transmembrane segment at 350–370 threads the bilayer; that stretch reads LGGLIPAGTNAVFVLIGMSLV. The Cytoplasmic segment spans residues 371 to 376; that stretch reads DKVGRR. A helical membrane pass occupies residues 377-397; sequence GLLLIGVPIMLLGHVWNIVSF. Residues 398–420 are Extracellular-facing; sequence YYMCKPTGGFLDTSYSYDTTDVG. The helical transmembrane segment at 421–441 threads the bilayer; that stretch reads IVIGGIVFFVVGYGLTYSHLV. The Cytoplasmic portion of the chain corresponds to 442–455; that stretch reads WYQAEYLTLEVRSM. The chain crosses the membrane as a helical span at residues 456–476; the sequence is GSGIATTVCWIANLVVSVSYL. Residues 477–485 lie on the Extracellular side of the membrane; it reads SELETMTPS. A helical membrane pass occupies residues 486–506; that stretch reads GTYGFYFGISVIGFVFLVFCL. Topologically, residues 507-590 are cytoplasmic; the sequence is PETKQLSIDE…GGKRTPSASV (84 aa).

Belongs to the major facilitator superfamily. Sugar transporter (TC 2.A.1.1) family.

It localises to the cell membrane. The enzyme catalyses myo-inositol(out) + H(+)(out) = myo-inositol(in) + H(+)(in). In terms of biological role, transporter for myo-inositol. This Cryptococcus neoformans var. grubii serotype A (strain H99 / ATCC 208821 / CBS 10515 / FGSC 9487) (Filobasidiella neoformans var. grubii) protein is Myo-inositol transporter 3A (ITR3A).